The chain runs to 1138 residues: Ras guanine nucleotide exchange factor N (1138 aa).

LRR repeat units lie at residues 1–16 (MSYN…ITQL), 18–39 (HLKS…SYFG), and 43–64 (TLQK…FYLL). 7 disordered regions span residues 126–180 (ALKN…SNNN), 239–301 (FNSE…GSRK), 319–360 (NKTH…SDTN), 389–411 (IDSP…SPPQ), 473–540 (GSPT…NNNN), 601–643 (ATTV…TSGS), and 660–680 (MSDV…SQSG). Positions 140–158 (KTKGLHSSSSNINTSNNIT) are enriched in low complexity. Over residues 263–275 (RAQTISGKQPSII) the composition is skewed to polar residues. Residues 283 to 299 (SGGGSGNNNNSGGGGGS) are compositionally biased toward gly residues. Low complexity predominate over residues 326–352 (GHSSSSQSNSTTNTPSISSTPYPTSTI). Basic and acidic residues predominate over residues 393–405 (RTLERRNSSRDDI). Over residues 487 to 496 (PQHPPPPPPI) the composition is skewed to pro residues. The segment covering 498–511 (DNNQPKLNQSQNLI) has biased composition (polar residues). Low complexity-rich tracts occupy residues 512 to 540 (NTNS…NNNN) and 605 to 634 (NSNS…NSPQ). The N-terminal Ras-GEF domain maps to 733 to 855 (GVPKVKNITL…LLLNIINMKR (123 aa)). The 228-residue stretch at 891 to 1118 (RPHEIARQLT…YSEASKIEEK (228 aa)) folds into the Ras-GEF domain.

Its function is as follows. Promotes the exchange of Ras-bound GDP by GTP. May play a role in chemotaxis. The polypeptide is Ras guanine nucleotide exchange factor N (gefN) (Dictyostelium discoideum (Social amoeba)).